We begin with the raw amino-acid sequence, 269 residues long: Ribosomal RNA large subunit methyltransferase E (269 aa).

The S-adenosyl-L-methionine site is built by Gly-58, Trp-60, Asp-78, Asp-96, and Asp-120. Lys-160 (proton acceptor) is an active-site residue. Residues 234-269 (HEKKEGNETSDNDEDNNKNGLMIKKIKELRGKRSKL) are disordered. The span at 258 to 269 (KIKELRGKRSKL) shows a compositional bias: basic and acidic residues.

This sequence belongs to the class I-like SAM-binding methyltransferase superfamily. RNA methyltransferase RlmE family.

The protein localises to the cytoplasm. It carries out the reaction uridine(2552) in 23S rRNA + S-adenosyl-L-methionine = 2'-O-methyluridine(2552) in 23S rRNA + S-adenosyl-L-homocysteine + H(+). Specifically methylates the uridine in position 2552 of 23S rRNA at the 2'-O position of the ribose in the fully assembled 50S ribosomal subunit. This is Ribosomal RNA large subunit methyltransferase E from Methanococcus aeolicus (strain ATCC BAA-1280 / DSM 17508 / OCM 812 / Nankai-3).